Consider the following 186-residue polypeptide: Elongation factor P (186 aa).

The protein belongs to the elongation factor P family.

It is found in the cytoplasm. Its pathway is protein biosynthesis; polypeptide chain elongation. In terms of biological role, involved in peptide bond synthesis. Stimulates efficient translation and peptide-bond synthesis on native or reconstituted 70S ribosomes in vitro. Probably functions indirectly by altering the affinity of the ribosome for aminoacyl-tRNA, thus increasing their reactivity as acceptors for peptidyl transferase. The chain is Elongation factor P from Streptococcus gordonii (strain Challis / ATCC 35105 / BCRC 15272 / CH1 / DL1 / V288).